The chain runs to 2563 residues: Compactin diketide synthase mlcB (2563 aa).

Positions S29–S450 constitute a Ketosynthase family 3 (KS3) domain. Residues C202, H337, and H372 each act as for beta-ketoacyl synthase activity in the active site. The acyl and malonyl transferase stretch occupies residues V568 to L915. The For malonyltransferase activity role is filled by S658. Over residues E951–Q960 the composition is skewed to basic and acidic residues. Residues E951–S971 are disordered. An N-terminal hotdog fold region spans residues H966–S1103. Residues H966 to D1284 form the PKS/mFAS DH domain. H998 (proton acceptor; for dehydratase activity) is an active-site residue. The tract at residues H998–G1010 is dehydratase-like. The interval D1121–D1284 is C-terminal hotdog fold. D1187 (proton donor; for dehydratase activity) is an active-site residue. The interval Y1542–T1579 is methyltransferase. In terms of domain architecture, Carrier spans E2485–C2562. At S2522 the chain carries O-(pantetheine 4'-phosphoryl)serine.

The cofactor is pantetheine 4'-phosphate.

It carries out the reaction holo-[2-methylbutanoate polyketide synthase] + 2 malonyl-CoA + S-adenosyl-L-methionine + 2 NADPH + 3 H(+) = (S)-2-methylbutanoyl-[2-methylbutanoate polyketide synthase] + S-adenosyl-L-homocysteine + 2 CO2 + 2 NADP(+) + 2 CoA + H2O. It functions in the pathway polyketide biosynthesis. Its function is as follows. Diketide synthase; part of the gene cluster that mediates the biosynthesis of compactin, also known as mevastatin or ML-236B, and which acts as a potent competitive inhibitor of HMG-CoA reductase. Compactin biosynthesis is performed in two stages. The first stage is catalyzed by the nonaketide synthase mlcA, which belongs to type I polyketide synthases and catalyzes the iterative nine-step formation of the polyketide. This PKS stage is completed by the action of dehydrogenase mlcG, which catalyzes the NADPH-dependent reduction of the unsaturated tetra-, penta- and heptaketide intermediates that arise during the mlcA-mediated biosynthesis of the nonaketide chain and leads to dihydro-ML-236C carboxylate. Covalently bound dihydro-ML-236C carboxylate is released from mlcA by the mlcF esterase. Conversion of dihydro-ML-236C carboxylate into ML-236A carboxylate is subsequently performed with the participation of molecular oxygen and P450 monoogygenase mlcC. Finally, mlcH performs the conversion of ML-236A carboxylate to ML-236B/compactin carboxylate through the addition of the side-chain diketide moiety produced by the diketide synthase mlcB. The sequence is that of Compactin diketide synthase mlcB (mlcB) from Penicillium citrinum.